The following is a 489-amino-acid chain: Rhamnulokinase (489 aa).

An ATP-binding site is contributed by 13–17 (ASSGR). Cysteine 68 and cysteine 222 are joined by a disulfide. Substrate-binding positions include glycine 83 and 236–238 (HDT). Residue aspartate 237 is the Proton acceptor of the active site. Threonine 259 serves as a coordination point for ATP. Asparagine 296 serves as a coordination point for substrate. Residue glutamine 304 participates in ATP binding. An intrachain disulfide couples cysteine 353 to cysteine 370. ATP is bound at residue glycine 402. Cysteine 413 and cysteine 417 form a disulfide bridge.

It belongs to the rhamnulokinase family. In terms of assembly, monomer. It depends on Mg(2+) as a cofactor.

It carries out the reaction L-rhamnulose + ATP = L-rhamnulose 1-phosphate + ADP + H(+). Its pathway is carbohydrate degradation; L-rhamnose degradation; glycerone phosphate from L-rhamnose: step 2/3. Involved in the catabolism of L-rhamnose (6-deoxy-L-mannose). Catalyzes the transfer of the gamma-phosphate group from ATP to the 1-hydroxyl group of L-rhamnulose to yield L-rhamnulose 1-phosphate. The sequence is that of Rhamnulokinase from Escherichia coli O157:H7.